The primary structure comprises 553 residues: MSDIALTVSILALVAVVGLFIGNVKFRGVGLGIGGVLFGGIIVGHFVSQAGMTLSSDMLHVIQEFGLILFVYTIGIQVGPGFFASLRVSGLRLNLFAVLIVIIGGLVTAILHKLFDIPLPVVLGIFSGAVTNTPALGAGQQILRDLGTPMAMVDQMGMSYAMAYPFGICGILFTMWMLRVIFRVNVETEAQQHESTRTNGGALIRTINIRVENPNLHNLAIKDVPILNGDKVICSRLKREETLKVPSPETVIQLGDLLHLVGQPADLHNAQLVIGQEVDTSLSTKGTDLRVERVVVTNENVLGKRIRDLHFKERYDVVISRLNRAGVELVASSDISLQFGDILNLVGRPSAIDAVANVLGNVQQKLQQVQMLPVFIGIGLGVLLGSIPVFVPGFPAALKLGLAGGPLIMALILGRIGSIGKLYWFMPPSANLALRELGIVLFLSVVGLKSGGDFIHTLVDGEGLSWIGYGALITAVPLITVGILARMLAKMNYLTMCGMLAGSMTDPPALAFANNLHPTSGAAALSYATVYPLVMFLRIITPQLLAVLFWSIG.

Helical transmembrane passes span 4-24, 28-48, 65-85, 95-115, and 158-178; these read IALT…IGNV, GVGL…HFVS, FGLI…FFAS, LFAV…HKLF, and MSYA…MWML. 2 RCK C-terminal domains span residues 191–276 and 279–361; these read QQHE…VIGQ and DTSL…VLGN. A run of 6 helical transmembrane segments spans residues 371 to 391, 393 to 413, 439 to 459, 464 to 484, 493 to 513, and 533 to 553; these read MLPV…PVFV, GFPA…ALIL, IVLF…HTLV, LSWI…VGIL, YLTM…LAFA, and LVMF…WSIG.

It belongs to the AAE transporter (TC 2.A.81) family. YidE subfamily.

The protein resides in the cell membrane. This is Putative transport protein YidE from Escherichia coli O127:H6 (strain E2348/69 / EPEC).